The chain runs to 910 residues: Protein translocase subunit SecA (910 aa).

Residues Gln-89, 107–111 (GEGKT), and Asp-502 contribute to the ATP site. The Zn(2+) site is built by Cys-894, Cys-896, Cys-905, and His-906.

Belongs to the SecA family. As to quaternary structure, monomer and homodimer. Part of the essential Sec protein translocation apparatus which comprises SecA, SecYEG and auxiliary proteins SecDF-YajC and YidC. The cofactor is Zn(2+).

Its subcellular location is the cell inner membrane. It localises to the cytoplasm. It catalyses the reaction ATP + H2O + cellular proteinSide 1 = ADP + phosphate + cellular proteinSide 2.. In terms of biological role, part of the Sec protein translocase complex. Interacts with the SecYEG preprotein conducting channel. Has a central role in coupling the hydrolysis of ATP to the transfer of proteins into and across the cell membrane, serving both as a receptor for the preprotein-SecB complex and as an ATP-driven molecular motor driving the stepwise translocation of polypeptide chains across the membrane. The protein is Protein translocase subunit SecA of Mesorhizobium japonicum (strain LMG 29417 / CECT 9101 / MAFF 303099) (Mesorhizobium loti (strain MAFF 303099)).